The chain runs to 82 residues: Putative membrane protein insertion efficiency factor (82 aa).

The protein belongs to the UPF0161 family.

Its subcellular location is the cell inner membrane. Functionally, could be involved in insertion of integral membrane proteins into the membrane. The protein is Putative membrane protein insertion efficiency factor of Francisella tularensis subsp. holarctica (strain LVS).